Consider the following 393-residue polypeptide: Histidinol dehydrogenase (393 aa).

Positions 112, 171, and 194 each coordinate NAD(+). Substrate contacts are provided by Thr-217, Gln-239, and His-242. Zn(2+) is bound by residues Gln-239 and His-242. Residues Glu-293 and His-294 each act as proton acceptor in the active site. 4 residues coordinate substrate: His-294, Asp-326, Glu-379, and His-384. A Zn(2+)-binding site is contributed by Asp-326. His-384 lines the Zn(2+) pocket.

It belongs to the histidinol dehydrogenase family. Zn(2+) serves as cofactor.

It carries out the reaction L-histidinol + 2 NAD(+) + H2O = L-histidine + 2 NADH + 3 H(+). The protein operates within amino-acid biosynthesis; L-histidine biosynthesis; L-histidine from 5-phospho-alpha-D-ribose 1-diphosphate: step 9/9. In terms of biological role, catalyzes the sequential NAD-dependent oxidations of L-histidinol to L-histidinaldehyde and then to L-histidine. This Sulfolobus acidocaldarius (strain ATCC 33909 / DSM 639 / JCM 8929 / NBRC 15157 / NCIMB 11770) protein is Histidinol dehydrogenase.